A 169-amino-acid chain; its full sequence is Cell division inhibitor SulA (169 aa).

The segment at 106–112 (ALRTGNY) is ftsZ binding. The segment at 162-169 (KIHSNLYH) is lon protease binding.

This sequence belongs to the SulA family. Interacts with FtsZ. Post-translationally, is rapidly cleaved and degraded by the Lon protease once DNA damage is repaired.

In terms of biological role, component of the SOS system and an inhibitor of cell division. Accumulation of SulA causes rapid cessation of cell division and the appearance of long, non-septate filaments. In the presence of GTP, binds a polymerization-competent form of FtsZ in a 1:1 ratio, thus inhibiting FtsZ polymerization and therefore preventing it from participating in the assembly of the Z ring. This mechanism prevents the premature segregation of damaged DNA to daughter cells during cell division. This Escherichia coli O7:K1 (strain IAI39 / ExPEC) protein is Cell division inhibitor SulA.